The sequence spans 722 residues: Serine/threonine-protein kinase MARK2 (722 aa).

The interval 1 to 46 (MSSARTPLPTLNERDTEQPTLGHLDSKPSSKSNMLRGRNSATSADE) is disordered. Polar residues predominate over residues 27–45 (KPSSKSNMLRGRNSATSAD). Position 40 is a phosphoserine (serine 40). A Protein kinase domain is found at 53-304 (YRLLKTIGKG…LEQIMKDRWM (252 aa)). Phosphothreonine; by autocatalysis is present on threonine 58. Residues 59–67 (IGKGNFAKV) and lysine 82 contribute to the ATP site. Residues serine 91, serine 92, and serine 93 each carry the phosphoserine; by CaMK1 modification. Catalysis depends on aspartate 175, which acts as the Proton acceptor. At threonine 208 the chain carries Phosphothreonine; by LKB1 and TAOK1. Serine 212 is modified (phosphoserine; by GSK3-beta). The residue at position 274 (serine 274) is a Phosphoserine; by autocatalysis. Threonine 275 is modified (phosphothreonine; by autocatalysis). Threonine 294 bears the Phosphothreonine; by CaMK1 mark. A UBA domain is found at 323-362 (YKDPRRTELMVSMGYTREEIQDSLVGQRYNEVMATYLLLG). The interval 373–576 (ITLKPRPSAD…SQGRRGASGS (204 aa)) is disordered. Serine 408 and serine 409 each carry phosphoserine. The span at 417-431 (PTSNSYSKKTQSNNA) shows a compositional bias: polar residues. Over residues 432–442 (ENKRPEEETGR) the composition is skewed to basic and acidic residues. The residue at position 453 (serine 453) is a Phosphoserine. At threonine 464 the chain carries Phosphothreonine. Over residues 464–483 (TPTPSTNSVLSTSTNRSRNS) the composition is skewed to polar residues. A phosphoserine mark is found at serine 483 and serine 490. The span at 492 to 505 (GQASIQNGKDSTAP) shows a compositional bias: polar residues. Low complexity predominate over residues 511–524 (ASPSAHNISSSSGA). Phosphoserine is present on residues serine 512, serine 514, and serine 535. Position 539 is a phosphothreonine; by PKC/PRKCZ (threonine 539). Phosphoserine is present on residues serine 562 and serine 656. Positions 673–722 (TPGHENFVQWEMEVCKLPRLSLNGVRFKRISGTSMAFKNIASKIANELKL) constitute a KA1 domain.

It belongs to the protein kinase superfamily. CAMK Ser/Thr protein kinase family. SNF1 subfamily. In terms of assembly, homodimer. Interacts (when phosphorylated at Thr-539) with YWHAZ. Interacts with MTCL1; the interaction is direct and increases MARK2 microtubule-binding ability. Interacts with PAK5; leading to inhibit the protein kinase activity. Interacts with MAPT/TAU. Interacts with YWHAB, YWHAG and YWHAQ. Mg(2+) serves as cofactor. In terms of processing, autophosphorylated. Phosphorylated at Thr-208 by STK11/LKB1 in complex with STE20-related adapter-alpha (STRADA) pseudo kinase and CAB39. Phosphorylation at Thr-208 by TAOK1 activates the kinase activity, leading to phosphorylation and detachment of MAPT/TAU from microtubules. Phosphorylation at Ser-212 by GSK3-beta (GSK3B) inhibits the kinase activity. Phosphorylation by CaMK1 promotes activity and is required to promote neurite outgrowth. Phosphorylation at Thr-539 by PRKCZ/aPKC in polarized epithelial cells inhibits the kinase activity and promotes binding to 14-3-3 protein YWHAZ, leading to relocation from cell membrane to cytoplasm.

It is found in the cell membrane. Its subcellular location is the lateral cell membrane. The protein resides in the cytoplasm. The protein localises to the cytoskeleton. It localises to the cell projection. It is found in the dendrite. The catalysed reaction is L-seryl-[protein] + ATP = O-phospho-L-seryl-[protein] + ADP + H(+). The enzyme catalyses L-threonyl-[protein] + ATP = O-phospho-L-threonyl-[protein] + ADP + H(+). It catalyses the reaction L-seryl-[tau protein] + ATP = O-phospho-L-seryl-[tau protein] + ADP + H(+). It carries out the reaction L-threonyl-[tau protein] + ATP = O-phospho-L-threonyl-[tau protein] + ADP + H(+). Its activity is regulated as follows. Inhibited by hymenialdisine. Activated by phosphorylation on Thr-208 by STK11/LKB1 and TAOK1. Inhibited by phosphorylation at Ser-212 or Thr-539. Inhibited by PAK5; inhibition is independent of the kinase activity of PAK5. Serine/threonine-protein kinase. Involved in cell polarity and microtubule dynamics regulation. Phosphorylates CRTC2/TORC2, DCX, HDAC7, KIF13B, MAP2, MAP4 and RAB11FIP2. Phosphorylates the microtubule-associated protein MAPT/TAU. Plays a key role in cell polarity by phosphorylating the microtubule-associated proteins MAP2, MAP4 and MAPT/TAU at KXGS motifs, causing detachment from microtubules, and their disassembly. Regulates epithelial cell polarity by phosphorylating RAB11FIP2. Involved in the regulation of neuronal migration through its dual activities in regulating cellular polarity and microtubule dynamics, possibly by phosphorylating and regulating DCX. Regulates axogenesis by phosphorylating KIF13B, promoting interaction between KIF13B and 14-3-3 and inhibiting microtubule-dependent accumulation of KIF13B. Also required for neurite outgrowth and establishment of neuronal polarity. Regulates localization and activity of some histone deacetylases by mediating phosphorylation of HDAC7, promoting subsequent interaction between HDAC7 and 14-3-3 and export from the nucleus. Also acts as a positive regulator of the Wnt signaling pathway, probably by mediating phosphorylation of dishevelled proteins (DVL1, DVL2 and/or DVL3). Modulates the developmental decision to build a columnar versus a hepatic epithelial cell apparently by promoting a switch from a direct to a transcytotic mode of apical protein delivery. Essential for the asymmetric development of membrane domains of polarized epithelial cells. The chain is Serine/threonine-protein kinase MARK2 from Rattus norvegicus (Rat).